The sequence spans 467 residues: Proton extrusion protein PxcA (467 aa).

Positions 146 to 161 (SQVRTTSSQPPENPSL) are enriched in polar residues. 2 disordered regions span residues 146-167 (SQVRTTSSQPPENPSLTDALRT) and 186-205 (PQLIKQRTEQSKKSRGKADT). Over residues 191–203 (QRTEQSKKSRGKA) the composition is skewed to basic and acidic residues. The next 4 membrane-spanning stretches (helical) occupy residues 249–269 (FILLIIIVPLLTHQLSKALIV), 352–372 (IFSVGAFIWLLLVSKPSIMVL), 391–411 (IIILFTDVFVGFHSPHGWEVI), and 427–447 (FIFLFIATFPVILDTIFKYWI).

This sequence belongs to the CemA family.

Its subcellular location is the cell inner membrane. In terms of biological role, required for H(+) efflux immediately after light irradiation to form a rapid H(+) concentration gradient across the thylakoid membranes. Together with PxcL, contributes to transient H(+) uptake following dark to light transition. In Nostoc sp. (strain PCC 7120 / SAG 25.82 / UTEX 2576), this protein is Proton extrusion protein PxcA.